Here is a 206-residue protein sequence, read N- to C-terminus: Orotate phosphoribosyltransferase (206 aa).

Residues Lys26, 72–73, Arg99, Lys100, Lys103, His105, and 124–132 contribute to the 5-phospho-alpha-D-ribose 1-diphosphate site; these read YK and DDVMTSGFS. Residues Thr128 and Arg157 each contribute to the orotate site.

This sequence belongs to the purine/pyrimidine phosphoribosyltransferase family. PyrE subfamily. Homodimer. Requires Mg(2+) as cofactor.

It carries out the reaction orotidine 5'-phosphate + diphosphate = orotate + 5-phospho-alpha-D-ribose 1-diphosphate. Its pathway is pyrimidine metabolism; UMP biosynthesis via de novo pathway; UMP from orotate: step 1/2. In terms of biological role, catalyzes the transfer of a ribosyl phosphate group from 5-phosphoribose 1-diphosphate to orotate, leading to the formation of orotidine monophosphate (OMP). This is Orotate phosphoribosyltransferase from Buchnera aphidicola subsp. Baizongia pistaciae (strain Bp).